A 470-amino-acid chain; its full sequence is Cysteine--tRNA ligase (470 aa).

Cys-27 contacts Zn(2+). The short motif at 29-39 (PTVYNFFHIGN) is the 'HIGH' region element. Zn(2+) contacts are provided by Cys-211, His-236, and Glu-240. The 'KMSKS' region motif lies at 268 to 272 (KMSKS). Lys-271 serves as a coordination point for ATP.

Belongs to the class-I aminoacyl-tRNA synthetase family. In terms of assembly, monomer. It depends on Zn(2+) as a cofactor.

It localises to the cytoplasm. It catalyses the reaction tRNA(Cys) + L-cysteine + ATP = L-cysteinyl-tRNA(Cys) + AMP + diphosphate. In Clostridium botulinum (strain Eklund 17B / Type B), this protein is Cysteine--tRNA ligase.